Reading from the N-terminus, the 373-residue chain is Chaperone protein DnaJ (373 aa).

The J domain maps to 5–70 (CYYEVLEVSR…EKRSRYDRFG (66 aa)). A CR-type zinc finger spans residues 134–212 (GTEVELNIPV…CRGAGYVRKQ (79 aa)). Zn(2+) contacts are provided by C147, C150, C164, C167, C186, C189, C200, and C203. CXXCXGXG motif repeat units lie at residues 147–154 (CDTCEGSG), 164–171 (CSHCGGRG), 186–193 (CPACNGRG), and 200–207 (CSECRGAG).

Belongs to the DnaJ family. As to quaternary structure, homodimer. Zn(2+) is required as a cofactor.

The protein resides in the cytoplasm. In terms of biological role, participates actively in the response to hyperosmotic and heat shock by preventing the aggregation of stress-denatured proteins and by disaggregating proteins, also in an autonomous, DnaK-independent fashion. Unfolded proteins bind initially to DnaJ; upon interaction with the DnaJ-bound protein, DnaK hydrolyzes its bound ATP, resulting in the formation of a stable complex. GrpE releases ADP from DnaK; ATP binding to DnaK triggers the release of the substrate protein, thus completing the reaction cycle. Several rounds of ATP-dependent interactions between DnaJ, DnaK and GrpE are required for fully efficient folding. Also involved, together with DnaK and GrpE, in the DNA replication of plasmids through activation of initiation proteins. In Maridesulfovibrio salexigens (strain ATCC 14822 / DSM 2638 / NCIMB 8403 / VKM B-1763) (Desulfovibrio salexigens), this protein is Chaperone protein DnaJ.